Reading from the N-terminus, the 357-residue chain is Biotin synthase (357 aa).

Residues 1–27 (MTTAETKPATETGENAGTTGTAGTAAT) form a disordered region. Positions 9 to 27 (ATETGENAGTTGTAGTAAT) are enriched in low complexity. The 226-residue stretch at 78 to 303 (DAVEMEGIIS…RQLLRFAGGR (226 aa)) folds into the Radical SAM core domain. [4Fe-4S] cluster contacts are provided by C93, C97, and C100. The [2Fe-2S] cluster site is built by C136, C228, and R298.

It belongs to the radical SAM superfamily. Biotin synthase family. In terms of assembly, homodimer. The cofactor is [4Fe-4S] cluster. Requires [2Fe-2S] cluster as cofactor.

The enzyme catalyses (4R,5S)-dethiobiotin + (sulfur carrier)-SH + 2 reduced [2Fe-2S]-[ferredoxin] + 2 S-adenosyl-L-methionine = (sulfur carrier)-H + biotin + 2 5'-deoxyadenosine + 2 L-methionine + 2 oxidized [2Fe-2S]-[ferredoxin]. Its pathway is cofactor biosynthesis; biotin biosynthesis; biotin from 7,8-diaminononanoate: step 2/2. Functionally, catalyzes the conversion of dethiobiotin (DTB) to biotin by the insertion of a sulfur atom into dethiobiotin via a radical-based mechanism. The chain is Biotin synthase from Corynebacterium jeikeium (strain K411).